The sequence spans 266 residues: Proteasome subunit beta type-7 (266 aa).

The propeptide at 1 to 34 is removed in mature form; that stretch reads MENLNRGGFDFDLCNRNNVLEKTGLRMKGFMKTG. Thr-35 serves as the catalytic Nucleophile.

The protein belongs to the peptidase T1B family. The 26S proteasome consists of a 20S proteasome core and two 19S regulatory subunits. The 20S proteasome core is composed of 28 subunits that are arranged in four stacked rings, resulting in a barrel-shaped structure. The two end rings are each formed by seven alpha subunits, and the two central rings are each formed by seven beta subunits. The catalytic chamber with the active sites is on the inside of the barrel.

Its subcellular location is the cytoplasm. The protein localises to the nucleus. The catalysed reaction is Cleavage of peptide bonds with very broad specificity.. The proteasome is a multicatalytic proteinase complex which is characterized by its ability to cleave peptides with Arg, Phe, Tyr, Leu, and Glu adjacent to the leaving group at neutral or slightly basic pH. The proteasome has an ATP-dependent proteolytic activity. The protein is Proteasome subunit beta type-7 (psmB7) of Dictyostelium discoideum (Social amoeba).